The primary structure comprises 222 residues: Pyrrolidone-carboxylate peptidase (222 aa).

Catalysis depends on residues E80, C146, and H170.

This sequence belongs to the peptidase C15 family. As to quaternary structure, homotetramer.

Its subcellular location is the cytoplasm. It catalyses the reaction Release of an N-terminal pyroglutamyl group from a polypeptide, the second amino acid generally not being Pro.. In terms of biological role, removes 5-oxoproline from various penultimate amino acid residues except L-proline. The sequence is that of Pyrrolidone-carboxylate peptidase from Mycobacterium marinum (strain ATCC BAA-535 / M).